Consider the following 193-residue polypeptide: dCTP deaminase (193 aa).

Residues 110-115 (RSSLAR), aspartate 128, 136-138 (VLE), tyrosine 171, lysine 178, and glutamine 182 contribute to the dCTP site. Residue glutamate 138 is the Proton donor/acceptor of the active site. A disordered region spans residues 173–193 (KRKNAKYKDQQDAVASRISQD).

The protein belongs to the dCTP deaminase family. As to quaternary structure, homotrimer.

It catalyses the reaction dCTP + H2O + H(+) = dUTP + NH4(+). It participates in pyrimidine metabolism; dUMP biosynthesis; dUMP from dCTP (dUTP route): step 1/2. Functionally, catalyzes the deamination of dCTP to dUTP. In Shewanella sp. (strain ANA-3), this protein is dCTP deaminase.